A 219-amino-acid chain; its full sequence is NADH-ubiquinone oxidoreductase 23 kDa subunit, mitochondrial (219 aa).

2 consecutive 4Fe-4S ferredoxin-type domains span residues 111 to 140 (RRYP…IEAE) and 150 to 179 (TRYD…ESPN). [4Fe-4S] cluster-binding residues include cysteine 120, cysteine 123, cysteine 126, cysteine 130, cysteine 159, cysteine 162, cysteine 165, and cysteine 169.

It belongs to the complex I 23 kDa subunit family. Complex I is composed of about 40 different subunits. It depends on [4Fe-4S] cluster as a cofactor.

It is found in the mitochondrion. The catalysed reaction is a ubiquinone + NADH + 5 H(+)(in) = a ubiquinol + NAD(+) + 4 H(+)(out). Functionally, core subunit of the mitochondrial membrane respiratory chain NADH dehydrogenase (Complex I) that is believed to belong to the minimal assembly required for catalysis. Complex I functions in the transfer of electrons from NADH to the respiratory chain. The immediate electron acceptor for the enzyme is believed to be ubiquinone. May donate electrons to ubiquinone. This is NADH-ubiquinone oxidoreductase 23 kDa subunit, mitochondrial (nuo21.3c) from Neurospora crassa (strain ATCC 24698 / 74-OR23-1A / CBS 708.71 / DSM 1257 / FGSC 987).